Consider the following 508-residue polypeptide: MILVLDFGSQYTQLIARRLRESGIYAEIVPFFESIENIQKKAPKGLILSGGPASVYAKDAYKPSEKIFDLNVPILGICYGMQYLVDFFGGVVAGANEQEFGKAVLEITQDSVIFEGVKTKSLVWMSHMDKVIELPKGFITLAKSPNSPHCAIENGKIFGLQFHPEVIQSEEGGKILENFALLVCDCEKTWGMQHFAQREIARLKEKIANDKVLCAVSGGVDSTVVATLLYRAIKDNLIAVFVDHGLLRKNEKERVQAMFKDLQIPLNTIDAKGIFLSKLKGVSEPELKRKIIGETFIEVFEKEAKKHHLKGKIEFLAQGTLYPDVIESVSVKGPSKVIKTHHNVGGLPEWMDFKLIEPLRELFKDEARLLGKELGISQDFLMRHPFPGPGLAVRILGEVSESKIKRLQEADFIFIEELKKANLYDKVWQAFCVLLNVNSVGVMGDNRTYENAICLRAVNASDGMTASFSFLEHSFLEKVSNRITNEVSGINRVVYDITSKPPGTIEWE.

In terms of domain architecture, Glutamine amidotransferase type-1 spans 1–189 (MILVLDFGSQ…ALLVCDCEKT (189 aa)). Cysteine 78 (nucleophile) is an active-site residue. Active-site residues include histidine 163 and glutamate 165. Positions 190 to 383 (WGMQHFAQRE…LGISQDFLMR (194 aa)) constitute a GMPS ATP-PPase domain. 217–223 (SGGVDST) contributes to the ATP binding site.

As to quaternary structure, homodimer.

The catalysed reaction is XMP + L-glutamine + ATP + H2O = GMP + L-glutamate + AMP + diphosphate + 2 H(+). The protein operates within purine metabolism; GMP biosynthesis; GMP from XMP (L-Gln route): step 1/1. Catalyzes the synthesis of GMP from XMP. The chain is GMP synthase [glutamine-hydrolyzing] from Helicobacter pylori (strain HPAG1).